A 177-amino-acid chain; its full sequence is Alpha-crystallin A chain (177 aa).

Met1 carries the N-acetylmethionine modification. The 111-residue stretch at 52-162 (VFRNFLDSGI…NWQDRPIPVS (111 aa)) folds into the sHSP domain. Zn(2+)-binding residues include His100 and Glu102. A disulfide bridge connects residues Cys131 and Cys142. The tract at residues 146-177 (TRPGDDSNWQDRPIPVSREEKQGTQPEIRADP) is disordered. Ser162 is a glycosylation site (O-linked (GlcNAc) serine). The span at 162-177 (SREEKQGTQPEIRADP) shows a compositional bias: basic and acidic residues.

This sequence belongs to the small heat shock protein (HSP20) family. As to quaternary structure, heteropolymer composed of three CRYAA and one CRYAB subunits. Inter-subunit bridging via zinc ions enhances stability, which is crucial as there is no protein turn over in the lens. Can also form homodimers and homotetramers (dimers of dimers) which serve as the building blocks of homooligomers.

Its subcellular location is the cytoplasm. It localises to the nucleus. Functionally, contributes to the transparency and refractive index of the lens. May act as a chaperone, preventing aggregation of various proteins under a wide range of stress conditions. The protein is Alpha-crystallin A chain (cryaa) of Squalus acanthias (Spiny dogfish).